We begin with the raw amino-acid sequence, 375 residues long: tRNA-specific 2-thiouridylase MnmA (375 aa).

Residues 12-19 (GMSGGVDS) and Met-38 contribute to the ATP site. The segment at 98-100 (NPD) is interaction with target base in tRNA. Cys-103 (nucleophile) is an active-site residue. Cys-103 and Cys-200 are disulfide-bonded. Residue Gly-127 coordinates ATP. The interval 150–152 (KDQ) is interaction with tRNA. Cys-200 functions as the Cysteine persulfide intermediate in the catalytic mechanism. Residues 312–313 (RY) form an interaction with tRNA region.

Belongs to the MnmA/TRMU family.

Its subcellular location is the cytoplasm. It carries out the reaction S-sulfanyl-L-cysteinyl-[protein] + uridine(34) in tRNA + AH2 + ATP = 2-thiouridine(34) in tRNA + L-cysteinyl-[protein] + A + AMP + diphosphate + H(+). Its function is as follows. Catalyzes the 2-thiolation of uridine at the wobble position (U34) of tRNA, leading to the formation of s(2)U34. The protein is tRNA-specific 2-thiouridylase MnmA of Lactobacillus helveticus (strain DPC 4571).